We begin with the raw amino-acid sequence, 770 residues long: Penicillin-binding protein 1C (770 aa).

At 1–8 the chain is on the cytoplasmic side; the sequence is MPRLLTKR. Residues 9 to 29 traverse the membrane as a helical; Signal-anchor for type II membrane protein segment; it reads GCWITLAAAPFLLFLAAWGAD. At 30-770 the chain is on the periplasmic side; it reads KLWPLPLHEV…QIATVKFVMQ (741 aa). The tract at residues 43 to 213 is transglycosylase; that stretch reads RVVVAQDGTP…SRLRPDRWPE (171 aa). Catalysis depends on glutamate 84, which acts as the Proton donor; for transglycosylase activity. Positions 278–559 are transpeptidase; the sequence is AGLQRRLEEL…FASAVPLLNQ (282 aa). Serine 342 serves as the catalytic Acyl-ester intermediate; for transpeptidase activity.

This sequence in the N-terminal section; belongs to the glycosyltransferase 51 family. It in the C-terminal section; belongs to the transpeptidase family.

The protein resides in the cell inner membrane. It carries out the reaction [GlcNAc-(1-&gt;4)-Mur2Ac(oyl-L-Ala-gamma-D-Glu-L-Lys-D-Ala-D-Ala)](n)-di-trans,octa-cis-undecaprenyl diphosphate + beta-D-GlcNAc-(1-&gt;4)-Mur2Ac(oyl-L-Ala-gamma-D-Glu-L-Lys-D-Ala-D-Ala)-di-trans,octa-cis-undecaprenyl diphosphate = [GlcNAc-(1-&gt;4)-Mur2Ac(oyl-L-Ala-gamma-D-Glu-L-Lys-D-Ala-D-Ala)](n+1)-di-trans,octa-cis-undecaprenyl diphosphate + di-trans,octa-cis-undecaprenyl diphosphate + H(+). Its pathway is cell wall biogenesis; peptidoglycan biosynthesis. Its activity is regulated as follows. Transglycosylase activity can be inhibited by moenomycin. Functionally, cell wall formation. The enzyme has a penicillin-insensitive transglycosylase N-terminal domain (formation of linear glycan strands) and a transpeptidase C-terminal domain which may not be functional. In Escherichia coli (strain K12), this protein is Penicillin-binding protein 1C (pbpC).